The chain runs to 377 residues: Adaptive-response sensory kinase SasA (377 aa).

In terms of domain architecture, Histidine kinase spans 154 to 373; the sequence is MLVHDLRSPL…SFHFTLPVYR (220 aa). His157 is subject to Phosphohistidine; by autocatalysis.

Homooligomerizes. Interacts with KaiC. Participates in the KaiABC clock complex, whose core is composed of a KaiC homohexamer, 6 KaiB and up to 6 KaiA dimers. SasA and KaiB(fs) compete to bind to KaiC.

The enzyme catalyses ATP + protein L-histidine = ADP + protein N-phospho-L-histidine.. Member of the two-component regulatory system SasA/RpaA involved in genome-wide circadian gene expression. One of several clock output pathways. Participates in the Kai clock protein complex, the main circadian regulator in cyanobacteria, via its interaction with KaiC. KaiC enhances the autophosphorylation activity of SasA, which then transfers its phosphate group to RpaA to activate it. In addition to its output function, recruits fold-shifted KaiB (KaiB(fs)) to KaiC to cooperatively form the KaiB(6):KaiC(6) complex (independent of SasA kinase activity). Required for robustness of the circadian rhythm of gene expression and is involved in clock output, also required for adaptation to light/dark cycles. The sequence is that of Adaptive-response sensory kinase SasA from Synechococcus sp. (strain JA-2-3B'a(2-13)) (Cyanobacteria bacterium Yellowstone B-Prime).